Reading from the N-terminus, the 104-residue chain is Protamine-2 (104 aa).

The interval 1-91 (MVRYRMRSPS…RRGCRRSRRR (91 aa)) is disordered. Residues S8, S10, and S33 each carry the phosphoserine modification. Residues 33–44 (SPERVEDYGRTE) show a composition bias toward basic and acidic residues. The segment covering 45–91 (RGHHHRHRRCKRLHRIHKRRRSCRRRRRHSCRHRRRHRRGCRRSRRR) has biased composition (basic residues).

This sequence belongs to the protamine P2 family. Interacts with TDRP. Post-translationally, proteolytic processing into mature chains is required for histone eviction during spermatogenesis. Transition proteins (TNP1 and TNP2) are required for processing. In terms of tissue distribution, testis.

The protein resides in the nucleus. The protein localises to the chromosome. Its function is as follows. Protamines substitute for histones in the chromatin of sperm during the haploid phase of spermatogenesis. They compact sperm DNA into a highly condensed, stable and inactive complex. This is Protamine-2 (Prm2) from Rattus norvegicus (Rat).